We begin with the raw amino-acid sequence, 501 residues long: Lysine--tRNA ligase (501 aa).

Residues glutamate 411 and glutamate 418 each coordinate Mg(2+).

This sequence belongs to the class-II aminoacyl-tRNA synthetase family. As to quaternary structure, homodimer. Requires Mg(2+) as cofactor.

The protein localises to the cytoplasm. The enzyme catalyses tRNA(Lys) + L-lysine + ATP = L-lysyl-tRNA(Lys) + AMP + diphosphate. This chain is Lysine--tRNA ligase, found in Pseudomonas aeruginosa (strain UCBPP-PA14).